The chain runs to 177 residues: Putative adenylate kinase (177 aa).

ATP-binding residues include Gly10, Gly12, Lys13, Thr14, and Thr15. An NMP region spans residues 30-50 (SLRDYAIEKGIGEMKGDELEV). Residues 99 to 109 (ERGYSREKVGE) are LID. ATP-binding residues include Arg100 and Lys138.

This sequence belongs to the adenylate kinase family. AK6 subfamily. As to quaternary structure, interacts with uS11. Not a structural component of 40S pre-ribosomes, but transiently interacts with them by binding to uS11.

The catalysed reaction is AMP + ATP = 2 ADP. It catalyses the reaction ATP + H2O = ADP + phosphate + H(+). In terms of biological role, broad-specificity nucleoside monophosphate (NMP) kinase that catalyzes the reversible transfer of the terminal phosphate group between nucleoside triphosphates and monophosphates. Also has ATPase activity. Involved in the late maturation steps of the 30S ribosomal particles, specifically 16S rRNA maturation. While NMP activity is not required for ribosome maturation, ATPase activity is. Associates transiently with small ribosomal subunit protein uS11. ATP hydrolysis breaks the interaction with uS11. May temporarily remove uS11 from the ribosome to enable a conformational change of the ribosomal RNA that is needed for the final maturation step of the small ribosomal subunit. In Thermococcus gammatolerans (strain DSM 15229 / JCM 11827 / EJ3), this protein is Putative adenylate kinase.